Consider the following 791-residue polypeptide: AP-1 complex subunit gamma-like 2 (791 aa).

The 116-residue stretch at 671–786 (APIPSVRVFE…QEIFEVDNLP (116 aa)) folds into the GAE domain.

This sequence belongs to the adaptor complexes large subunit family. In terms of assembly, may interact with AP1S1/Sigma1A-adaptin and AP1S2/Sigma1B-adaptin. Probably does not interact with APB1. Interacts (via GAE domain) with RABEP1, NECAP1, CLINT1 and AFTPH/aftiphilin. Interacts with HBV major surface antigen L. Interacts with HBV core protein C in a ubiquitin-dependent manner. Binds ubiquitin. As to expression, widely expressed.

The protein resides in the golgi apparatus membrane. It localises to the cytoplasmic vesicle membrane. Its subcellular location is the endosome membrane. May function in protein sorting in late endosomes or multivesucular bodies (MVBs). Involved in MVB-assisted maturation of hepatitis B virus (HBV). This chain is AP-1 complex subunit gamma-like 2 (Ap1g2), found in Mus musculus (Mouse).